We begin with the raw amino-acid sequence, 334 residues long: S-adenosylmethionine:tRNA ribosyltransferase-isomerase (334 aa).

This sequence belongs to the QueA family. In terms of assembly, monomer.

It is found in the cytoplasm. It carries out the reaction 7-aminomethyl-7-carbaguanosine(34) in tRNA + S-adenosyl-L-methionine = epoxyqueuosine(34) in tRNA + adenine + L-methionine + 2 H(+). The protein operates within tRNA modification; tRNA-queuosine biosynthesis. Its function is as follows. Transfers and isomerizes the ribose moiety from AdoMet to the 7-aminomethyl group of 7-deazaguanine (preQ1-tRNA) to give epoxyqueuosine (oQ-tRNA). The polypeptide is S-adenosylmethionine:tRNA ribosyltransferase-isomerase (Thermosipho melanesiensis (strain DSM 12029 / CIP 104789 / BI429)).